Consider the following 228-residue polypeptide: Mediator of RNA polymerase II transcription subunit 7-B (228 aa).

This sequence belongs to the Mediator complex subunit 7 family. Component of the Mediator complex.

It is found in the nucleus. Its function is as follows. Component of the Mediator complex, a coactivator involved in the regulated transcription of nearly all RNA polymerase II-dependent genes. Mediator functions as a bridge to convey information from gene-specific regulatory proteins to the basal RNA polymerase II transcription machinery. Mediator is recruited to promoters by direct interactions with regulatory proteins and serves as a scaffold for the assembly of a functional preinitiation complex with RNA polymerase II and the general transcription factors. The chain is Mediator of RNA polymerase II transcription subunit 7-B (med7-b) from Xenopus laevis (African clawed frog).